A 399-amino-acid polypeptide reads, in one-letter code: Syndecan (399 aa).

Residues 1–28 (MKPKQKISVEPLLLVAILIGVLVAATHA) form the signal peptide. A disordered region spans residues 28–319 (AQDQKSVKPS…TKGIDHRPNG (292 aa)). At 29-340 (QDQKSVKPSA…TSSFFSQPGI (312 aa)) the chain is on the extracellular side. Low complexity predominate over residues 36-46 (PSAAAPSAAAS). O-linked (Xyl...) (glycosaminoglycan) serine glycosylation is present at S62. The segment covering 67-77 (GIHEDLEKDPD) has biased composition (basic and acidic residues). Residues S79, S81, and S110 are each glycosylated (O-linked (Xyl...) (glycosaminoglycan) serine). The segment covering 99–116 (SHNTRISQSSNSGINTAH) has biased composition (polar residues). Residues 117 to 172 (TPTQTSSTIPTTSTSTPMPTTTPTATTPASTTTAAATQISSFANSSSTTTTTLAPT) show a composition bias toward low complexity. N160 carries an N-linked (GlcNAc...) asparagine glycan. The segment covering 191 to 214 (TESSGDGIDADAEDDDEDDGDDKD) has biased composition (acidic residues). Residue S194 is glycosylated (O-linked (Xyl...) (glycosaminoglycan) serine). Over residues 215 to 226 (YDYNKELDKEID) the composition is skewed to basic and acidic residues. Residues 253-270 (DEIDVDGGDEDDNGDSDI) are compositionally biased toward acidic residues. A compositionally biased stretch (polar residues) spans 299 to 309 (PNTNVNSQPSD). A helical transmembrane segment spans residues 341–365 (LAAVIGGAVVGLLCAILVVMFIVYR). The Cytoplasmic portion of the chain corresponds to 366 to 399 (MRKKDEGSYALDEPKRSPANNSYAKNANNREFYA). A disordered region spans residues 373 to 399 (SYALDEPKRSPANNSYAKNANNREFYA). Over residues 383-399 (PANNSYAKNANNREFYA) the composition is skewed to polar residues.

This sequence belongs to the syndecan proteoglycan family. In terms of tissue distribution, in 13-16 hours embryos, expressed in lymph glands, peripheral and central nervous system and basal surfaces of gut epithelia. Sdc and robo are coexpressed in domains adjacent to slit; in tracheal pits and midline glia cells.

The protein localises to the membrane. Its function is as follows. Cell surface proteoglycan that bears heparan sulfate. Required for axonal and myotube guidance, is a necessary component of slit/robo signaling and is required in the slit target cells. The chain is Syndecan (Sdc) from Drosophila melanogaster (Fruit fly).